A 470-amino-acid polypeptide reads, in one-letter code: A-type ATP synthase subunit B (470 aa).

It belongs to the ATPase alpha/beta chains family. As to quaternary structure, has multiple subunits with at least A(3), B(3), C, D, E, F, H, I and proteolipid K(x).

The protein localises to the cell membrane. Its function is as follows. Component of the A-type ATP synthase that produces ATP from ADP in the presence of a proton gradient across the membrane. The B chain is a regulatory subunit. The sequence is that of A-type ATP synthase subunit B from Haloarcula marismortui (strain ATCC 43049 / DSM 3752 / JCM 8966 / VKM B-1809) (Halobacterium marismortui).